A 114-amino-acid polypeptide reads, in one-letter code: Hydrogenase maturation factor HypA (114 aa).

His2 is a binding site for Ni(2+). Positions 70, 73, 86, and 89 each coordinate Zn(2+).

Belongs to the HypA/HybF family.

Involved in the maturation of [NiFe] hydrogenases. Required for nickel insertion into the metal center of the hydrogenase. The sequence is that of Hydrogenase maturation factor HypA from Crocosphaera subtropica (strain ATCC 51142 / BH68) (Cyanothece sp. (strain ATCC 51142)).